The sequence spans 125 residues: MARLAGVDIPNEKRIEIALTYIFGVGRTRAKETLAATGISPDIRVKDLTDEQLITLRDYLEANYKIEGDLRREVDADIRRKIQINCYQGQRHRKGLPVRGQRTKTNARTRKGPKRTVAGKKKATK.

Residues 90-125 (QRHRKGLPVRGQRTKTNARTRKGPKRTVAGKKKATK) form a disordered region.

Belongs to the universal ribosomal protein uS13 family. As to quaternary structure, part of the 30S ribosomal subunit. Forms a loose heterodimer with protein S19. Forms two bridges to the 50S subunit in the 70S ribosome.

Its function is as follows. Located at the top of the head of the 30S subunit, it contacts several helices of the 16S rRNA. In the 70S ribosome it contacts the 23S rRNA (bridge B1a) and protein L5 of the 50S subunit (bridge B1b), connecting the 2 subunits; these bridges are implicated in subunit movement. Contacts the tRNAs in the A and P-sites. The polypeptide is Small ribosomal subunit protein uS13 (Bifidobacterium longum (strain DJO10A)).